The following is a 400-amino-acid chain: MAAGGLSRSERKAAERVRRLREEQQRERLRQVSRILRKAAAERSAEEGRLLAESADLVTELQGRSRRREGLKRRQEEVCDDPEELRGKVRELASAVRNAKYLVVYTGAGISTAASIPDYRGPNGVWTLLQKGRSVSAADLSEAEPTLTHMSITRLHEQKLVQHVVSQNCDGLHLRSGLPRTAISELHGNMYIEVCTSCVPNREYVRVFDVTERTALHRHQTGRTCHKCGTQLRDTIVHFGERGTLGQPLNWEAATEAASRADTILCLGSSLKVLKKYPRLWCMTKPPSRRPKLYIVNLQWTPKDDWAALKLHGKCDDVMRLLMAELGLEIPAYSRWQDPIFSLATPLRAGEEGSHSRKSLCRSREEAPPGDRGAPLSSAPILGGWFGRGCTKRTKRKKVT.

Positions 1–27 (MAAGGLSRSERKAAERVRRLREEQQRE) are disordered. The segment covering 8-27 (RSERKAAERVRRLREEQQRE) has biased composition (basic and acidic residues). The Deacetylase sirtuin-type domain occupies 82–329 (PEELRGKVRE…RLLMAELGLE (248 aa)). NAD(+) contacts are provided by residues 107–126 (GAGI…NGVW) and 167–170 (QNCD). H187 serves as the catalytic Proton acceptor. Zn(2+) is bound by residues C195, C198, C225, and C228. Residues 268 to 270 (GSS), 297 to 299 (NLQ), and C315 each bind NAD(+). Residues 354 to 380 (SHSRKSLCRSREEAPPGDRGAPLSSAP) are disordered. At R388 the chain carries Asymmetric dimethylarginine; alternate. At R388 the chain carries Omega-N-methylarginine; alternate.

This sequence belongs to the sirtuin family. Class IV subfamily. In terms of assembly, interacts with UBTF and the RNA polymerase I complex. Interacts with components of the B-WICH complex, such as MYBBP1A, SMARCA5/SNF2H and BAZ1B/WSTF. Interacts with ELK4, leading to stabilization at target promoters for H3K18Ac deacetylation. Interacts with histone H2A and/or histone H2B. Interacts with DNMT1. Interacts with SIRT1. Requires Zn(2+) as cofactor. In terms of processing, phosphorylated during mitosis. Post-translationally, methylation at Arg-388 by PRMT6 inhibits the H3K18Ac histone deacetylase activity, promoting mitochondria biogenesis and maintaining mitochondria respiration. Ubiquitinated via 'Lys-63'-linked ubiquitin chains. Deubiquitinated by USP7, inhibiting the H3K18Ac histone deacetylase activity and regulating gluconeogenesis. Ubiquitinated by E3 ubiquitin-protein ligase complex containing FBXO7; leading to proteasomal degradation.

The protein localises to the nucleus. It localises to the nucleolus. The protein resides in the nucleoplasm. It is found in the chromosome. Its subcellular location is the cytoplasm. It carries out the reaction N(6)-acetyl-L-lysyl-[protein] + NAD(+) + H2O = 2''-O-acetyl-ADP-D-ribose + nicotinamide + L-lysyl-[protein]. The enzyme catalyses N(6)-glutaryl-L-lysyl-[protein] + NAD(+) + H2O = 2''-O-glutaryl-ADP-D-ribose + nicotinamide + L-lysyl-[protein]. The catalysed reaction is N(6)-succinyl-L-lysyl-[protein] + NAD(+) + H2O = 2''-O-succinyl-ADP-D-ribose + nicotinamide + L-lysyl-[protein]. It catalyses the reaction N(6)-propanoyl-L-lysyl-[protein] + NAD(+) + H2O = 3''-O-propanoyl-ADP-D-ribose + nicotinamide + L-lysyl-[protein]. It carries out the reaction N(6)-decanoyl-L-lysyl-[protein] + NAD(+) + H2O = 2''-O-decanoyl-ADP-D-ribose + nicotinamide + L-lysyl-[protein]. Its activity is regulated as follows. NAD-dependent protein-lysine deacetylase and deacylase activities are activated by nucleic acids. Histone deacetylase activity is activated by DNA and nucleosomes. Protein-lysine deacylase activity is activated by RNA. H3K18Ac histone deacetylase activity is inhibited by methylation at Arg-388. H3K18Ac histone deacetylase activity is inhibited by deubiquitination by USP7. In terms of biological role, NAD-dependent protein-lysine deacylase that can act both as a deacetylase or deacylase (desuccinylase, depropionylase, deglutarylase and dedecanoylase), depending on the context. Specifically mediates deacetylation of histone H3 at 'Lys-18' (H3K18Ac). In contrast to other histone deacetylases, displays strong preference for a specific histone mark, H3K18Ac, directly linked to control of gene expression. H3K18Ac is mainly present around the transcription start site of genes and has been linked to activation of nuclear hormone receptors; SIRT7 thereby acts as a transcription repressor. Moreover, H3K18 hypoacetylation has been reported as a marker of malignancy in various cancers and seems to maintain the transformed phenotype of cancer cells. Also able to mediate deacetylation of histone H3 at 'Lys-36' (H3K36Ac) in the context of nucleosomes. Also mediates deacetylation of non-histone proteins, such as ATM, CDK9, DDX21, DDB1, FBL, FKBP5/FKBP51, GABPB1, RAN, RRP9/U3-55K and POLR1E/PAF53. Enriched in nucleolus where it stimulates transcription activity of the RNA polymerase I complex. Acts by mediating the deacetylation of the RNA polymerase I subunit POLR1E/PAF53, thereby promoting the association of RNA polymerase I with the rDNA promoter region and coding region. In response to metabolic stress, SIRT7 is released from nucleoli leading to hyperacetylation of POLR1E/PAF53 and decreased RNA polymerase I transcription. Required to restore the transcription of ribosomal RNA (rRNA) at the exit from mitosis. Promotes pre-ribosomal RNA (pre-rRNA) cleavage at the 5'-terminal processing site by mediating deacetylation of RRP9/U3-55K, a core subunit of the U3 snoRNP complex. Mediates 'Lys-37' deacetylation of Ran, thereby regulating the nuclear export of NF-kappa-B subunit RELA/p65. Acts as a regulator of DNA damage repair by mediating deacetylation of ATM during the late stages of DNA damage response, promoting ATM dephosphorylation and deactivation. Suppresses the activity of the DCX (DDB1-CUL4-X-box) E3 ubiquitin-protein ligase complexes by mediating deacetylation of DDB1, which prevents the interaction between DDB1 and CUL4 (CUL4A or CUL4B). Activates RNA polymerase II transcription by mediating deacetylation of CDK9, thereby promoting 'Ser-2' phosphorylation of the C-terminal domain (CTD) of RNA polymerase II. Deacetylates FBL, promoting histone-glutamine methyltransferase activity of FBL. Acts as a regulator of mitochondrial function by catalyzing deacetylation of GABPB1. Regulates Akt/AKT1 activity by mediating deacetylation of FKBP5/FKBP51. Required to prevent R-loop-associated DNA damage and transcription-associated genomic instability by mediating deacetylation and subsequent activation of DDX21, thereby overcoming R-loop-mediated stalling of RNA polymerases. In addition to protein deacetylase activity, also acts as a protein-lysine deacylase. Acts as a protein depropionylase by mediating depropionylation of Osterix (SP7), thereby regulating bone formation by osteoblasts. Acts as a histone deglutarylase by mediating deglutarylation of histone H4 on 'Lys-91' (H4K91glu); a mark that destabilizes nucleosomes by promoting dissociation of the H2A-H2B dimers from nucleosomes. Acts as a histone desuccinylase: in response to DNA damage, recruited to DNA double-strand breaks (DSBs) and catalyzes desuccinylation of histone H3 on 'Lys-122' (H3K122succ), thereby promoting chromatin condensation and DSB repair. Also promotes DSB repair by promoting H3K18Ac deacetylation, regulating non-homologous end joining (NHEJ). Along with its role in DNA repair, required for chromosome synapsis during prophase I of female meiosis by catalyzing H3K18Ac deacetylation. Involved in transcriptional repression of LINE-1 retrotransposon via H3K18Ac deacetylation, and promotes their association with the nuclear lamina. Required to stabilize ribosomal DNA (rDNA) heterochromatin and prevent cellular senescence induced by rDNA instability. Acts as a negative regulator of SIRT1 by preventing autodeacetylation of SIRT1, restricting SIRT1 deacetylase activity. The polypeptide is NAD-dependent protein deacetylase sirtuin-7 (Homo sapiens (Human)).